We begin with the raw amino-acid sequence, 173 residues long: Peptide deformylase (173 aa).

Fe cation is bound by residues C98 and H140. E141 is an active-site residue. H144 serves as a coordination point for Fe cation.

It belongs to the polypeptide deformylase family. The cofactor is Fe(2+).

The enzyme catalyses N-terminal N-formyl-L-methionyl-[peptide] + H2O = N-terminal L-methionyl-[peptide] + formate. Its function is as follows. Removes the formyl group from the N-terminal Met of newly synthesized proteins. Requires at least a dipeptide for an efficient rate of reaction. N-terminal L-methionine is a prerequisite for activity but the enzyme has broad specificity at other positions. The polypeptide is Peptide deformylase (Caulobacter vibrioides (strain ATCC 19089 / CIP 103742 / CB 15) (Caulobacter crescentus)).